A 287-amino-acid polypeptide reads, in one-letter code: MSNVTPKLVWPEDDYVDESLLEDHQGPARLEYDALVMLANLPPLTEEIMSRCPALPVKTRSTPEYTLVLDLDETLVHCSLTPLDNATMVFPVVFQNITYQVYVRLRPHLRTFLSRMAKTFEIIIFTASKKVYANKLCDILDPRKNHIRHRLFREHCVCVFGNYVKDLTILGRDPSKTMILDNAVQSFAYQLDNGIPIESWFHDRNDTELLKLCSFLEAIPTLGRDVREILRHKYRLRDHIPFYSIIHQQEGPGRLPLLEVAPPPVTEPNDEQLITQVVQKHPQLVQG.

Positions 60 to 219 (RSTPEYTLVL…LKLCSFLEAI (160 aa)) constitute an FCP1 homology domain.

Belongs to the CTDSPL2 family.

Its function is as follows. Probable phosphatase. This chain is CTD small phosphatase-like protein 3 (scpl-3), found in Caenorhabditis elegans.